Consider the following 138-residue polypeptide: Large ribosomal subunit protein mL54 (138 aa).

The N-terminal 14 residues, 1-14 (MATKRLFGATRTWA), are a transit peptide targeting the mitochondrion.

This sequence belongs to the mitochondrion-specific ribosomal protein mL54 family. In terms of assembly, component of the mitochondrial large ribosomal subunit (mt-LSU). Mature mammalian 55S mitochondrial ribosomes consist of a small (28S) and a large (39S) subunit. The 28S small subunit contains a 12S ribosomal RNA (12S mt-rRNA) and 30 different proteins. The 39S large subunit contains a 16S rRNA (16S mt-rRNA), a copy of mitochondrial valine transfer RNA (mt-tRNA(Val)), which plays an integral structural role, and 52 different proteins.

The protein resides in the mitochondrion. This is Large ribosomal subunit protein mL54 (MRPL54) from Homo sapiens (Human).